A 510-amino-acid chain; its full sequence is Ribonuclease Y (510 aa).

Residues Met-1–Val-21 form a helical membrane-spanning segment. The KH domain maps to Thr-200 to Ile-260. Residues Val-326–Ala-419 form the HD domain.

It belongs to the RNase Y family.

It is found in the cell membrane. Its function is as follows. Endoribonuclease that initiates mRNA decay. In Thermosipho melanesiensis (strain DSM 12029 / CIP 104789 / BI429), this protein is Ribonuclease Y.